We begin with the raw amino-acid sequence, 92 residues long: MAKRTKKVGIVGKYGTRYGASLRKVVKKQEVSQHSKFFCDFCGKYGMKRKAVGIWSCKGCNKTKAGGAYSLNTGGSVTVRSTIRRLREATEK.

Residues 39-60 (CDFCGKYGMKRKAVGIWSCKGC) form a C4-type zinc finger.

Belongs to the eukaryotic ribosomal protein eL43 family.

This Ostreococcus lucimarinus (strain CCE9901) protein is Large ribosomal subunit protein eL43 (RPL37a).